The chain runs to 129 residues: Glycine cleavage system H protein (129 aa).

The region spanning 24–106 (LVRVGISAFA…HGEGWLLVLR (83 aa)) is the Lipoyl-binding domain. Lys65 bears the N6-lipoyllysine mark.

It belongs to the GcvH family. The glycine cleavage system is composed of four proteins: P, T, L and H. (R)-lipoate is required as a cofactor.

Functionally, the glycine cleavage system catalyzes the degradation of glycine. The H protein shuttles the methylamine group of glycine from the P protein to the T protein. The polypeptide is Glycine cleavage system H protein (Synechococcus sp. (strain CC9605)).